A 678-amino-acid polypeptide reads, in one-letter code: Penicillin-binding protein activator LpoA (678 aa).

A signal peptide spans 1-26; sequence MVPSTFSRLKAARCLPVVLAALIFAG. A lipid anchor (N-palmitoyl cysteine) is attached at cysteine 27. Cysteine 27 carries the S-diacylglycerol cysteine lipid modification. 3 stretches are compositionally biased toward low complexity: residues 300–310, 330–340, and 513–528; these read AADVAEQPQPQ, QPAAQPVPVSA, and TTNN…DDQF. Disordered stretches follow at residues 300–340 and 496–528; these read AADV…PVSA and ALTG…DDQF.

Belongs to the LpoA family. Interacts with PBP1a.

It is found in the cell outer membrane. In terms of biological role, regulator of peptidoglycan synthesis that is essential for the function of penicillin-binding protein 1A (PBP1a). This Shigella flexneri serotype 5b (strain 8401) protein is Penicillin-binding protein activator LpoA.